Consider the following 516-residue polypeptide: Maturase K (516 aa).

This sequence belongs to the intron maturase 2 family. MatK subfamily.

The protein resides in the plastid. Its subcellular location is the chloroplast. In terms of biological role, usually encoded in the trnK tRNA gene intron. Probably assists in splicing its own and other chloroplast group II introns. The sequence is that of Maturase K from Disporum sessile (Japanese fairy bells).